The chain runs to 560 residues: MFS-type transporter pgmG (560 aa).

The segment at 1–32 (MSETVTQTETDQRPATARSLGAEEKEAKSDEQ) is disordered. Over residues 21–31 (GAEEKEAKSDE) the composition is skewed to basic and acidic residues. 8 helical membrane-spanning segments follow: residues 45–65 (FIVIISILSSVTLYSLDNTIV), 84–104 (WLSVAFLVACVATNSIWSKIY), 111–131 (WLYLFCVVLFEVGSAMCGAAP), 141–161 (ALAGLGGAGLYVGVMTLLSVN), 174–194 (TGLTWGVGTVLGPIVGGGFAV), 201–221 (WSFYINLFFAAVAIPIYLFML), 242–262 (LGTILMIGACVSGVMAINFGG), and 275–295 (CFVVSGVLFIVFGLQQWYCIG). A glycan (N-linked (GlcNAc...) asparagine) is linked at N300. The helical transmembrane segment at 313–333 (FIILFVQTASVATVFFVPIYF) threads the bilayer. A glycan (N-linked (GlcNAc...) asparagine) is linked at N343. A run of 5 helical transmembrane segments spans residues 346-366 (AIDAGVRLLPLVCFIVAAMIL), 378-398 (MPWYLVGGCLSLVGSVLMYTI), 409-429 (GYMIILGVGGGMYAQASFAVA), 440-460 (VATGFISLAQLTGGTIALAIA), and 515-535 (ISQVYILPITGAAMSISLAIF).

Belongs to the major facilitator superfamily. TCR/Tet family.

The protein localises to the membrane. Functionally, MFS-type transporter; part of the gene cluster that mediates the biosynthesis of pleosporalin A, ascomycone A, as well as a third cryptic naphthoquinone derived pigment, all responsible for the coloration of conidia. Seems not to be involved in pigment biosynthesis although its expression is regulated by the cluster-specific transcription factor pgmR. The sequence is that of MFS-type transporter pgmG from Aspergillus terreus.